We begin with the raw amino-acid sequence, 266 residues long: Apolipoprotein A-I (266 aa).

An N-terminal signal peptide occupies residues 1-18 (MKAVVLTLAVLFLTGSQA). Repeat copies occupy residues 67-88 (LKLL…EQIG) and 89-110 (PVTQ…QEMS). Residues 67–266 (LKLLDNWDSL…DEATKKLNSQ (200 aa)) form a 10 X approximate tandem repeats region. Met109 is modified (methionine sulfoxide). The 3; half-length repeat unit spans residues 111-121 (KDLEEVKKKVQ). Tandem repeats lie at residues 122-143 (PYLD…QKVA), 144-165 (PLGA…EKLS), 166-187 (PLAE…AQLA), 188-209 (PYSE…EGGG), and 210-231 (AALT…EKAK). A 9; half-length repeat occupies 232-242 (PALEDLRQGLL). Residues 243-266 (PVLENFRVSLLAAVDEATKKLNSQ) form repeat 10.

It belongs to the apolipoprotein A1/A4/E family. As to quaternary structure, homodimer. Interacts with APOA1BP and CLU. Component of a sperm activating protein complex (SPAP), consisting of APOA1, an immunoglobulin heavy chain, an immunoglobulin light chain and albumin. Interacts with NDRG1. Interacts with SCGB3A2. Interacts with NAXE and YJEFN3. Post-translationally, glycosylated. Palmitoylated. In terms of processing, phosphorylation sites are present in the extracellular medium.

It localises to the secreted. In terms of biological role, participates in the reverse transport of cholesterol from tissues to the liver for excretion by promoting cholesterol efflux from tissues and by acting as a cofactor for the lecithin cholesterol acyltransferase (LCAT). As part of the SPAP complex, activates spermatozoa motility. This Mirounga angustirostris (Northern elephant seal) protein is Apolipoprotein A-I (APOA1).